The sequence spans 212 residues: Methylthioribulose-1-phosphate dehydratase (212 aa).

Positions 99 and 101 each coordinate Zn(2+).

Belongs to the aldolase class II family. MtnB subfamily. As to quaternary structure, homotetramer. Zn(2+) is required as a cofactor.

It carries out the reaction 5-(methylsulfanyl)-D-ribulose 1-phosphate = 5-methylsulfanyl-2,3-dioxopentyl phosphate + H2O. Its pathway is amino-acid biosynthesis; L-methionine biosynthesis via salvage pathway; L-methionine from S-methyl-5-thio-alpha-D-ribose 1-phosphate: step 2/6. In terms of biological role, catalyzes the dehydration of methylthioribulose-1-phosphate (MTRu-1-P) into 2,3-diketo-5-methylthiopentyl-1-phosphate (DK-MTP-1-P). This is Methylthioribulose-1-phosphate dehydratase from Bacillus pumilus (strain SAFR-032).